Consider the following 550-residue polypeptide: Hydroxylamine reductase (550 aa).

Cys-3, Cys-6, Cys-18, and Cys-25 together coordinate [2Fe-2S] cluster. Hybrid [4Fe-2O-2S] cluster contacts are provided by His-249, Glu-273, Cys-317, Cys-405, Cys-433, Cys-458, Glu-492, and Lys-494. Position 405 is a cysteine persulfide (Cys-405).

Belongs to the HCP family. Requires [2Fe-2S] cluster as cofactor. Hybrid [4Fe-2O-2S] cluster is required as a cofactor.

The protein resides in the cytoplasm. It carries out the reaction A + NH4(+) + H2O = hydroxylamine + AH2 + H(+). Its function is as follows. Catalyzes the reduction of hydroxylamine to form NH(3) and H(2)O. The polypeptide is Hydroxylamine reductase (Salmonella choleraesuis (strain SC-B67)).